Consider the following 435-residue polypeptide: Bystin (435 aa).

A disordered region spans residues 1–102 (MPKFKAARGA…VPQDGSDDEE (102 aa)). Arg-40 is subject to Omega-N-methylarginine. Positions 71–87 (AEHGSGDRPAVPRERTT) are enriched in basic and acidic residues. Residue Ser-98 is modified to Phosphoserine. The residue at position 154 (Thr-154) is a Phosphothreonine. A phosphoserine mark is found at Ser-165 and Ser-412.

This sequence belongs to the bystin family. Binds trophinin, tastin and cytokeratins.

It localises to the cytoplasm. Its subcellular location is the nucleus. The protein resides in the nucleolus. Its function is as follows. Required for processing of 20S pre-rRNA precursor and biogenesis of 40S ribosomal subunits. This is Bystin (BYSL) from Bos taurus (Bovine).